Consider the following 474-residue polypeptide: MNTAPFKLEADFASALPTMAAPWQGEEAPNPELVILNDDLAYSLGLDPTWLRTPEGVQFLLGLNPEPLTKAVAQAYSGHQFGQFVASLGDGRALLLGEARSADGVLHDIHLKGSGRTQFSRGADGRAVLGPVLREYIISEAMHALGVPTTRSLAVISTGRKIQRGSVAPGAVLVRVATSLIRVGSFQYSNISGGIELSQHLANYTITRHFPSLVAELSAPTPATYVSLFKAILQRQADTVGKWTRLGFVHGALNTDNTLISGETVDYGPCAFMERYRGDAKFSSIDTYGRYKFENQPMILGWNMARLVETLLPLLGATPDEGMTAAQEALVEFDDLCEQAIRKEFATALGLDESDTGTVEQFRELLYLHNPDITTLLRALTDNTAPPSGFEAFVHDWKTQDPDIEAMRAVNPLFIPRNHLVEAALADAVEGNLEKFHELLAAVTNPFDPTAGPDELRLPSEEGFEEDYMTFCGT.

ATP is bound by residues Gly-89, Gly-91, Arg-92, Lys-112, Asp-124, Gly-125, Arg-175, and Arg-182. The Proton acceptor role is filled by Asp-256. Positions 257 and 266 each coordinate Mg(2+). Asp-266 is an ATP binding site.

This sequence belongs to the SELO family. Mg(2+) is required as a cofactor. Mn(2+) serves as cofactor.

The catalysed reaction is L-seryl-[protein] + ATP = 3-O-(5'-adenylyl)-L-seryl-[protein] + diphosphate. The enzyme catalyses L-threonyl-[protein] + ATP = 3-O-(5'-adenylyl)-L-threonyl-[protein] + diphosphate. It catalyses the reaction L-tyrosyl-[protein] + ATP = O-(5'-adenylyl)-L-tyrosyl-[protein] + diphosphate. It carries out the reaction L-histidyl-[protein] + UTP = N(tele)-(5'-uridylyl)-L-histidyl-[protein] + diphosphate. The catalysed reaction is L-seryl-[protein] + UTP = O-(5'-uridylyl)-L-seryl-[protein] + diphosphate. The enzyme catalyses L-tyrosyl-[protein] + UTP = O-(5'-uridylyl)-L-tyrosyl-[protein] + diphosphate. In terms of biological role, nucleotidyltransferase involved in the post-translational modification of proteins. It can catalyze the addition of adenosine monophosphate (AMP) or uridine monophosphate (UMP) to a protein, resulting in modifications known as AMPylation and UMPylation. The protein is Protein nucleotidyltransferase YdiU of Corynebacterium glutamicum (strain ATCC 13032 / DSM 20300 / JCM 1318 / BCRC 11384 / CCUG 27702 / LMG 3730 / NBRC 12168 / NCIMB 10025 / NRRL B-2784 / 534).